The sequence spans 670 residues: uncharacterized protein (670 aa).

Transmembrane regions (helical) follow at residues 23 to 42 (YALRNTIAMCLALTVAYYLN), 47 to 69 (YWAMTSAAVVSFPTVGGVISKSL), 76 to 98 (LLGAIAALLLAGHTLNEPWFFLL), 118 to 140 (VAYAFQLAGYTAAIIAFPMVNIT), 153 to 170 (VCEVIVGILCGGMMMMIL), 381 to 403 (QWDAGANALTLAAISCVLYSAVA), 410 to 432 (SLLMRTLVLLSLFSFVVKFGLMV), 437 to 454 (LWQFLLFLFPLLATMQLL), 461 to 483 (FAALWGQLIVFMGSFIAVTNPPV), and 493 to 510 (NLAKIVGVALAWLAFAIL).

It belongs to the aromatic acid exporter ArAE (TC 2.A.85) family.

It is found in the cell membrane. This is an uncharacterized protein from Escherichia coli (strain K12).